Reading from the N-terminus, the 451-residue chain is Rab GDP-dissociation inhibitor (451 aa).

2 interaction with YPT1 regions span residues 106 to 112 (RYVDFKQ) and 234 to 259 (YPMY…TYML).

It belongs to the Rab GDI family. Interacts with the GDP-bound form of Rab GTPase YPT1. Interacts with YPT10.

The protein resides in the cytoplasm. Regulates the GDP/GTP exchange reaction of SEC4 by inhibiting the dissociation of GDP from it, and the subsequent binding of GTP to SEC4. Plays an essential role in the yeast secretory pathway. Extracts GDP-bound YPT7 from vacuolar membranes, antagonizing vacuolar membrane fusion. This chain is Rab GDP-dissociation inhibitor (GDI1), found in Saccharomyces cerevisiae (strain ATCC 204508 / S288c) (Baker's yeast).